The primary structure comprises 988 residues: Ephrin type-B receptor 3 (988 aa).

The disordered stretch occupies residues Gly-1–Leu-24. The Extracellular segment spans residues Gly-1 to Leu-534. The region spanning Gly-11–Ala-189 is the Eph LBD domain. A disulfide bond links Cys-53 and Cys-171. 2 consecutive Fibronectin type-III domains span residues Val-311–Ala-424 and Ala-425–Asp-522. Residues Asn-323 and Asn-418 are each glycosylated (N-linked (GlcNAc...) asparagine). A helical membrane pass occupies residues Ile-535–Val-555. At Cys-556–Val-988 the chain is on the cytoplasmic side. Phosphotyrosine; by autocatalysis is present on Tyr-604. Residues Val-623–Ile-886 enclose the Protein kinase domain. Residues Ile-629–Val-637 and Lys-655 contribute to the ATP site. Asp-748 functions as the Proton acceptor in the catalytic mechanism. Residues Thr-915 to Gln-979 form the SAM domain. The short motif at Val-986 to Val-988 is the PDZ-binding element.

The protein belongs to the protein kinase superfamily. Tyr protein kinase family. Ephrin receptor subfamily. In terms of assembly, heterotetramer upon binding of the ligand. The heterotetramer is composed of an ephrin dimer and a receptor dimer. Oligomerization is probably required to induce biological responses. Phosphorylated. Autophosphorylates upon ligand-binding. Autophosphorylation on Tyr-604 is required for interaction with SH2 domain-containing proteins. Present in 10-day embryonic brain and body tissues. Prominent expression in kidney. Lower expression in lung, and barely detectable in brain, liver, heart, skeletal muscle and thymus.

It is found in the cell membrane. Its subcellular location is the cell projection. It localises to the dendrite. The catalysed reaction is L-tyrosyl-[protein] + ATP = O-phospho-L-tyrosyl-[protein] + ADP + H(+). Its function is as follows. Receptor tyrosine kinase which binds promiscuously transmembrane ephrin-B family ligands residing on adjacent cells, leading to contact-dependent bidirectional signaling into neighboring cells. The signaling pathway downstream of the receptor is referred to as forward signaling while the signaling pathway downstream of the ephrin ligand is referred to as reverse signaling. Generally has an overlapping and redundant function with EPHB2. Like EPHB2, functions in axon guidance during development. In addition to its role in axon guidance also plays an important redundant role with other ephrin-B receptors in development and maturation of dendritic spines and the formation of excitatory synapses. May control other aspects of development through regulation of cell migration and positioning. The sequence is that of Ephrin type-B receptor 3 (EPHB3) from Gallus gallus (Chicken).